A 275-amino-acid polypeptide reads, in one-letter code: 4-diphosphocytidyl-2-C-methyl-D-erythritol kinase (275 aa).

The active site involves lysine 14. 98 to 108 (PMGAGLGGGSS) serves as a coordination point for ATP. Residue aspartate 140 is part of the active site.

The protein belongs to the GHMP kinase family. IspE subfamily.

The catalysed reaction is 4-CDP-2-C-methyl-D-erythritol + ATP = 4-CDP-2-C-methyl-D-erythritol 2-phosphate + ADP + H(+). Its pathway is isoprenoid biosynthesis; isopentenyl diphosphate biosynthesis via DXP pathway; isopentenyl diphosphate from 1-deoxy-D-xylulose 5-phosphate: step 3/6. Catalyzes the phosphorylation of the position 2 hydroxy group of 4-diphosphocytidyl-2C-methyl-D-erythritol. The polypeptide is 4-diphosphocytidyl-2-C-methyl-D-erythritol kinase (Francisella tularensis subsp. holarctica (strain FTNF002-00 / FTA)).